A 398-amino-acid polypeptide reads, in one-letter code: Succinate--CoA ligase [ADP-forming] subunit beta (398 aa).

The region spanning 9-254 (KALLKSFGAP…KTEEDAKEIE (246 aa)) is the ATP-grasp domain. ATP-binding positions include lysine 46, 53–55 (GRG), glutamate 109, alanine 112, and glutamate 117. Mg(2+) is bound by residues asparagine 209 and aspartate 223. Substrate-binding positions include asparagine 274 and 331 to 333 (GIM).

Belongs to the succinate/malate CoA ligase beta subunit family. In terms of assembly, heterotetramer of two alpha and two beta subunits. It depends on Mg(2+) as a cofactor.

The enzyme catalyses succinate + ATP + CoA = succinyl-CoA + ADP + phosphate. The catalysed reaction is GTP + succinate + CoA = succinyl-CoA + GDP + phosphate. Its pathway is carbohydrate metabolism; tricarboxylic acid cycle; succinate from succinyl-CoA (ligase route): step 1/1. Its function is as follows. Succinyl-CoA synthetase functions in the citric acid cycle (TCA), coupling the hydrolysis of succinyl-CoA to the synthesis of either ATP or GTP and thus represents the only step of substrate-level phosphorylation in the TCA. The beta subunit provides nucleotide specificity of the enzyme and binds the substrate succinate, while the binding sites for coenzyme A and phosphate are found in the alpha subunit. The polypeptide is Succinate--CoA ligase [ADP-forming] subunit beta (Allorhizobium ampelinum (strain ATCC BAA-846 / DSM 112012 / S4) (Agrobacterium vitis (strain S4))).